The sequence spans 308 residues: tRNA pseudouridine synthase B (308 aa).

Aspartate 51 (nucleophile) is an active-site residue.

The protein belongs to the pseudouridine synthase TruB family. Type 1 subfamily.

The catalysed reaction is uridine(55) in tRNA = pseudouridine(55) in tRNA. In terms of biological role, responsible for synthesis of pseudouridine from uracil-55 in the psi GC loop of transfer RNAs. The protein is tRNA pseudouridine synthase B of Aromatoleum aromaticum (strain DSM 19018 / LMG 30748 / EbN1) (Azoarcus sp. (strain EbN1)).